The primary structure comprises 503 residues: Arabinose import ATP-binding protein AraG (503 aa).

ABC transporter domains are found at residues 5–240 (LRFD…MVGR) and 253–497 (LGDV…LPQG). Residue 37 to 44 (GENGAGKS) coordinates ATP.

It belongs to the ABC transporter superfamily. Arabinose importer (TC 3.A.1.2.2) family. As to quaternary structure, the complex is composed of two ATP-binding proteins (AraG), two transmembrane proteins (AraH) and a solute-binding protein (AraF).

The protein localises to the cell inner membrane. The catalysed reaction is L-arabinose(out) + ATP + H2O = L-arabinose(in) + ADP + phosphate + H(+). In terms of biological role, part of the ABC transporter complex AraFGH involved in arabinose import. Responsible for energy coupling to the transport system. This is Arabinose import ATP-binding protein AraG from Burkholderia pseudomallei (strain 1710b).